We begin with the raw amino-acid sequence, 87 residues long: Exendin-3 (87 aa).

Positions 1 to 21 (MKIILWLCVFGLFLATLFPVS) are cleaved as a signal peptide. Residues 22–45 (WQMPVESGLSSEDSASSESFASKI) constitute a propeptide that is removed on maturation. Residue serine 86 is modified to Serine amide.

The protein belongs to the glucagon family. In terms of tissue distribution, expressed by the venom gland.

The protein resides in the secreted. In terms of biological role, stimulates vasoactive intestinal peptide (VIP) receptors in high concentrations (&gt;100 nM), resulting in both an increase in cAMP and amylase secretion from pancreatic acini, although at low concentrations (between 0.3 and 3 nM) it increases cAMP without stimulating amylase release. Stimulates the GLP-1 receptor (GLP1R). Induces hypotension that is mediated by relaxation of cardiac smooth muscle. The chain is Exendin-3 from Heloderma horridum horridum (Mexican beaded lizard).